The chain runs to 195 residues: Exosome complex component CSL4 (195 aa).

Residues Ser21 and Ser98 each carry the phosphoserine modification. One can recognise an S1 motif domain in the interval 66–147; the sequence is DVGAIVTCKV…AQSNYLLTTA (82 aa).

Belongs to the CSL4 family. Component of the RNA exosome core complex (Exo-9), composed of EXOSC1, EXOSC2, EXOSC3, EXOSC4, EXOSC5, EXOSC6, EXOSC7, EXOSC8 and EXOSC9; within the complex interacts with EXOSC6. The catalytically inactive RNA exosome core complex (Exo-9) associates with the catalytic subunit EXOSC10/RRP6. Exo-9 may associate with DIS3 to form the nucleolar exosome complex, or DIS3L to form the cytoplasmic exosome complex. Exo-9 is formed by a hexameric base ring consisting of the heterodimers EXOSC4-EXOSC9, EXOSC5-EXOSC8 and EXOSC6-EXOSC7, and a cap ring consisting of EXOSC1, EXOSC2 and EXOSC3. The RNA exosome complex associates with cofactors C1D/RRP47, MPHOSPH6/MPP6 and MTREX/MTR4. Interacts with DDX60.

The protein localises to the nucleus. It localises to the nucleolus. It is found in the cytoplasm. In terms of biological role, non-catalytic component of the RNA exosome complex which has 3'-&gt;5' exoribonuclease activity and participates in a multitude of cellular RNA processing and degradation events. In the nucleus, the RNA exosome complex is involved in proper maturation of stable RNA species such as rRNA, snRNA and snoRNA, in the elimination of RNA processing by-products and non-coding 'pervasive' transcripts, such as antisense RNA species and promoter-upstream transcripts (PROMPTs), and of mRNAs with processing defects, thereby limiting or excluding their export to the cytoplasm. The RNA exosome may be involved in Ig class switch recombination (CSR) and/or Ig variable region somatic hypermutation (SHM) by targeting AICDA deamination activity to transcribed dsDNA substrates. In the cytoplasm, the RNA exosome complex is involved in general mRNA turnover and specifically degrades inherently unstable mRNAs containing AU-rich elements (AREs) within their 3' untranslated regions, and in RNA surveillance pathways, preventing translation of aberrant mRNAs. It seems to be involved in degradation of histone mRNA. The catalytic inactive RNA exosome core complex of 9 subunits (Exo-9) is proposed to play a pivotal role in the binding and presentation of RNA for ribonucleolysis, and to serve as a scaffold for the association with catalytic subunits and accessory proteins or complexes. EXOSC1 as peripheral part of the Exo-9 complex stabilizes the hexameric ring of RNase PH-domain subunits through contacts with EXOSC6 and EXOSC8. The polypeptide is Exosome complex component CSL4 (EXOSC1) (Homo sapiens (Human)).